Reading from the N-terminus, the 480-residue chain is Bifunctional protein HldE (480 aa).

Residues Met-1–Gln-316 are ribokinase. Residue Asn-192–Glu-195 participates in ATP binding. Asp-261 is a catalytic residue. The cytidylyltransferase stretch occupies residues Phe-342–Gln-480.

It in the N-terminal section; belongs to the carbohydrate kinase PfkB family. The protein in the C-terminal section; belongs to the cytidylyltransferase family. In terms of assembly, homodimer.

It catalyses the reaction D-glycero-beta-D-manno-heptose 7-phosphate + ATP = D-glycero-beta-D-manno-heptose 1,7-bisphosphate + ADP + H(+). The enzyme catalyses D-glycero-beta-D-manno-heptose 1-phosphate + ATP + H(+) = ADP-D-glycero-beta-D-manno-heptose + diphosphate. Its pathway is nucleotide-sugar biosynthesis; ADP-L-glycero-beta-D-manno-heptose biosynthesis; ADP-L-glycero-beta-D-manno-heptose from D-glycero-beta-D-manno-heptose 7-phosphate: step 1/4. The protein operates within nucleotide-sugar biosynthesis; ADP-L-glycero-beta-D-manno-heptose biosynthesis; ADP-L-glycero-beta-D-manno-heptose from D-glycero-beta-D-manno-heptose 7-phosphate: step 3/4. Functionally, catalyzes the phosphorylation of D-glycero-D-manno-heptose 7-phosphate at the C-1 position to selectively form D-glycero-beta-D-manno-heptose-1,7-bisphosphate. Catalyzes the ADP transfer from ATP to D-glycero-beta-D-manno-heptose 1-phosphate, yielding ADP-D-glycero-beta-D-manno-heptose. This chain is Bifunctional protein HldE, found in Hydrogenovibrio crunogenus (strain DSM 25203 / XCL-2) (Thiomicrospira crunogena).